We begin with the raw amino-acid sequence, 230 residues long: Agamous-like MADS-box protein AGL11 (230 aa).

The MADS-box domain occupies 3 to 57 (RGKIEIKRIENSTNRQVTFCKRRNGLLKKAYELSVLCDAEVALIVFSTRGRLYEY). Residues 87–177 (AAYYQQESAK…RTKVAEVERY (91 aa)) form the K-box domain. Residues 211 to 230 (SGSGNGGSYSDPDKKILHLG) form a disordered region. Residues 221–230 (DPDKKILHLG) are compositionally biased toward basic and acidic residues.

As to quaternary structure, interacts with AGL15 and AGL16.

It localises to the nucleus. Functionally, probable transcription factor. Is required, together with TT16/AGL32 for the maternal control of endothelium formation, which is essential for female gametophyte development and fertilization, and seed formation. The polypeptide is Agamous-like MADS-box protein AGL11 (AGL11) (Arabidopsis thaliana (Mouse-ear cress)).